We begin with the raw amino-acid sequence, 1380 residues long: Protein TORNADO 1 (1380 aa).

10 LRR repeats span residues 26-46 (FFNLQTLSFSSSGNTTHCQLI), 47-70 (TESSMNINVTRDNLTSLSQIFIEL), 105-132 (TSKIKQLAFRKNRFSEQCLNELSEILKR), 161-184 (NDSLEELQIWEDSIGSKGAEELSR), 266-289 (NTTVRSLDMTGAKLNSRWAKEFRW), 299-322 (EVKLSKTGLKDKAVVYIAAGLFKN), 323-346 (KSLQSLYVDGNRFGSVGVEDLLCP), 348-371 (SRFSALQLQANITLRSIVFGGSNT), 446-472 (INPLIEEIDLARTPLQDSGKADEIYQK), and 476-502 (NGRKIDEAETDDSLKDMPLTEPKSVRA). The 210-residue stretch at 493 to 702 (PLTEPKSVRA…HHIRMTSKAI (210 aa)) folds into the Roc domain. Residues 506-513 (GQNYAGKT) and 567-571 (NLAGQ) contribute to the GTP site. Residues 574 to 594 (FFALHDLMFPSPCFFLIVLSL) traverse the membrane as a helical segment. LRR repeat units lie at residues 640–665 (LTHSEKINLQSESFQATVGCIQRLRD), 688–712 (VSKLTHHIRMTSKAILQRVPRVYQL), 799–826 (LTQLIKLDVRKQSTGERNGFVSRKELEK), 1023–1046 (QSQFVSLHRLKEALSSVPAETMYD), 1131–1154 (EAVLQRLKIIEQEIRDLKQEIQGL), and 1229–1254 (QLGCDVMQIDNQAVKCLAPYMTNFMK). Residue 641-644 (THSE) participates in GTP binding. The COR domain occupies 757-931 (NIQIVETRRH…LQVHLHNRIM (175 aa)). Transmembrane regions (helical) follow at residues 1255-1275 (LVTFALRIGANWAAGMGHMIP) and 1287-1307 (PAVMTGAAGAAGAIGVAAALG).

In terms of tissue distribution, expressed in seedlings, roots, leaves, stems and flowers. Present in ovules, prominently in nucellus and integuments.

Its subcellular location is the membrane. Functionally, involved in the basipetal transport of auxin (IAA) that modulates growth and organs organization. Required for initial divisions in the epidermal/lateral root cap leading to the formation of epidermal cells and a clone of lateral root cap cells, as well as for the maintenance of the radial pattern of cell specification in the root, thus regulating the distinction between the lateral root cap and epidermis. The polypeptide is Protein TORNADO 1 (TRN1) (Arabidopsis thaliana (Mouse-ear cress)).